The following is a 393-amino-acid chain: NAD(P)H-quinone oxidoreductase subunit H, chloroplastic (393 aa).

This sequence belongs to the complex I 49 kDa subunit family. In terms of assembly, NDH is composed of at least 16 different subunits, 5 of which are encoded in the nucleus.

It localises to the plastid. The protein localises to the chloroplast thylakoid membrane. It carries out the reaction a plastoquinone + NADH + (n+1) H(+)(in) = a plastoquinol + NAD(+) + n H(+)(out). The catalysed reaction is a plastoquinone + NADPH + (n+1) H(+)(in) = a plastoquinol + NADP(+) + n H(+)(out). In terms of biological role, NDH shuttles electrons from NAD(P)H:plastoquinone, via FMN and iron-sulfur (Fe-S) centers, to quinones in the photosynthetic chain and possibly in a chloroplast respiratory chain. The immediate electron acceptor for the enzyme in this species is believed to be plastoquinone. Couples the redox reaction to proton translocation, and thus conserves the redox energy in a proton gradient. This chain is NAD(P)H-quinone oxidoreductase subunit H, chloroplastic, found in Eucalyptus globulus subsp. globulus (Tasmanian blue gum).